A 372-amino-acid chain; its full sequence is Enolase (372 aa).

Substrate-binding residues include H95 and E104. E147 acts as the Proton donor in catalysis. Residues D182, E232, and D257 each coordinate Mg(2+). 2 residues coordinate substrate: E232 and D257. K282 serves as the catalytic Proton acceptor. Substrate-binding positions include 309-312 (SHRS) and K333.

It belongs to the enolase family. As to quaternary structure, homodimer. It depends on Mg(2+) as a cofactor.

The protein localises to the cytoplasm. The enzyme catalyses (2R)-2-phosphoglycerate = phosphoenolpyruvate + H2O. It participates in carbohydrate degradation; glycolysis; pyruvate from D-glyceraldehyde 3-phosphate: step 4/5. This Chlamydomonas reinhardtii (Chlamydomonas smithii) protein is Enolase (ENO).